The following is a 494-amino-acid chain: Probable cobyric acid synthase (494 aa).

In terms of domain architecture, GATase cobBQ-type spans 249 to 447; sequence SVRIAVIRLP…LHGIFFNRRF (199 aa). Cys-331 serves as the catalytic Nucleophile. Residue His-439 is part of the active site.

Belongs to the CobB/CobQ family. CobQ subfamily.

It participates in cofactor biosynthesis; adenosylcobalamin biosynthesis. Catalyzes amidations at positions B, D, E, and G on adenosylcobyrinic A,C-diamide. NH(2) groups are provided by glutamine, and one molecule of ATP is hydrogenolyzed for each amidation. This Methanopyrus kandleri (strain AV19 / DSM 6324 / JCM 9639 / NBRC 100938) protein is Probable cobyric acid synthase.